Reading from the N-terminus, the 368-residue chain is WD repeat-containing protein wdr-5.1 (368 aa).

A disordered region spans residues methionine 1–isoleucine 64. The span at proline 16–proline 42 shows a compositional bias: low complexity. WD repeat units lie at residues glycine 77–threonine 116, glycine 119–threonine 158, glycine 161–threonine 200, alanine 203–threonine 242, aspartate 246–glutamine 285, glycine 288–serine 330, and glycine 333–serine 368.

This is WD repeat-containing protein wdr-5.1 from Caenorhabditis briggsae.